A 480-amino-acid chain; its full sequence is UDP-glucose 6-dehydrogenase 2 (480 aa).

NAD(+) contacts are provided by residues 8-13 (GAGYVG), D33, R38, 86-90 (VNTPT), 127-128 (ST), and E161. Substrate is bound by residues 157-161 (EFLAE), 216-223 (KLAANAFL), and 256-269 (RIGP…VGFG). The Nucleophile role is filled by C272. Residue 272–275 (CFQK) coordinates NAD(+). A substrate-binding site is contributed by 334-335 (FK). Position 342 (R342) interacts with NAD(+). Residue R447 coordinates substrate.

The protein belongs to the UDP-glucose/GDP-mannose dehydrogenase family. In terms of tissue distribution, preferentially expressed in roots.

It catalyses the reaction UDP-alpha-D-glucose + 2 NAD(+) + H2O = UDP-alpha-D-glucuronate + 2 NADH + 3 H(+). The protein operates within nucleotide-sugar biosynthesis; UDP-alpha-D-glucuronate biosynthesis; UDP-alpha-D-glucuronate from UDP-alpha-D-glucose: step 1/1. Its activity is regulated as follows. Inhibited by UDP-xylose. Its function is as follows. Involved in the biosynthesis of UDP-glucuronic acid (UDP-GlcA), providing nucleotide sugars for cell-wall polymers. Required for the formation of cell wall ingrowths on the outer cell walls of nematode-induced syncytia. The sequence is that of UDP-glucose 6-dehydrogenase 2 (UGD2) from Arabidopsis thaliana (Mouse-ear cress).